The primary structure comprises 370 residues: N-acetyltaurine hydrolase (370 aa).

Residues His26, His28, Glu189, His221, His250, and Asp318 each coordinate a divalent metal cation.

The protein belongs to the metallo-dependent hydrolases superfamily. Phosphotriesterase family. The cofactor is a divalent metal cation.

It is found in the cytoplasm. It localises to the cytosol. It catalyses the reaction N-acetyltaurine + H2O = taurine + acetate. Its function is as follows. N-acetyltaurine hydrolase catalyzes the hydrolysis of N-acetyltaurine into taurine and acetate. This is N-acetyltaurine hydrolase (pter) from Dictyostelium discoideum (Social amoeba).